Here is a 259-residue protein sequence, read N- to C-terminus: Hydroxyacylglutathione hydrolase (259 aa).

Zn(2+) contacts are provided by His56, His58, Asp60, His61, His112, Asp133, and His171. Residues 220 to 243 are disordered; it reads NPFLRTGETSVKEKADERSDAQNT. A compositionally biased stretch (basic and acidic residues) spans 229 to 239; that stretch reads SVKEKADERSD.

The protein belongs to the metallo-beta-lactamase superfamily. Glyoxalase II family. As to quaternary structure, monomer. Zn(2+) serves as cofactor.

It catalyses the reaction an S-(2-hydroxyacyl)glutathione + H2O = a 2-hydroxy carboxylate + glutathione + H(+). It participates in secondary metabolite metabolism; methylglyoxal degradation; (R)-lactate from methylglyoxal: step 2/2. Its function is as follows. Thiolesterase that catalyzes the hydrolysis of S-D-lactoyl-glutathione to form glutathione and D-lactic acid. This chain is Hydroxyacylglutathione hydrolase, found in Pseudomonas syringae pv. syringae (strain B728a).